A 615-amino-acid chain; its full sequence is Chaperone protein DnaK (615 aa).

Residue T177 is modified to Phosphothreonine; by autocatalysis. A disordered region spans residues 567–615 (TKESQGIAMKAYQKAQEKQAQEKGTQENTTAKNEKPQDEVVDADFEEKK). Over residues 581-591 (AQEKQAQEKGT) the composition is skewed to basic and acidic residues. A compositionally biased stretch (acidic residues) spans 605-615 (EVVDADFEEKK).

The protein belongs to the heat shock protein 70 family.

Acts as a chaperone. This is Chaperone protein DnaK from Onion yellows phytoplasma (strain OY-M).